Reading from the N-terminus, the 163-residue chain is EF-hand calcium-binding domain-containing protein 11 (163 aa).

EF-hand domains follow at residues S18 to Y53, R91 to K126, and L127 to E162. D140, D142, D144, H146, and D151 together coordinate Ca(2+).

The chain is EF-hand calcium-binding domain-containing protein 11 (EFCAB11) from Homo sapiens (Human).